The sequence spans 450 residues: Exodeoxyribonuclease 7 large subunit (450 aa).

It belongs to the XseA family. Heterooligomer composed of large and small subunits.

Its subcellular location is the cytoplasm. The enzyme catalyses Exonucleolytic cleavage in either 5'- to 3'- or 3'- to 5'-direction to yield nucleoside 5'-phosphates.. Functionally, bidirectionally degrades single-stranded DNA into large acid-insoluble oligonucleotides, which are then degraded further into small acid-soluble oligonucleotides. The chain is Exodeoxyribonuclease 7 large subunit from Listeria welshimeri serovar 6b (strain ATCC 35897 / DSM 20650 / CCUG 15529 / CIP 8149 / NCTC 11857 / SLCC 5334 / V8).